Reading from the N-terminus, the 177-residue chain is RNA silencing suppressor (177 aa).

As to quaternary structure, homooctamer. The eight monomers assemble into a closed ring that binds RNA.

It is found in the host cytoplasm. Functionally, acts as a suppressor of RNA-mediated gene silencing, also known as post-transcriptional gene silencing (PTGS), a mechanism of plant viral defense that limits the accumulation of viral RNAs. Binds to ssRNAs and dsRNAs in vitro. Also functions as a replication enhancer. The protein is RNA silencing suppressor of Beta vulgaris (Sugar beet).